Here is an 89-residue protein sequence, read N- to C-terminus: Small ribosomal subunit protein bS20 (89 aa).

The interval 1–28 (MTLANIKSAKKRAVQSEKSRQHNASQRS) is disordered.

It belongs to the bacterial ribosomal protein bS20 family.

In terms of biological role, binds directly to 16S ribosomal RNA. This is Small ribosomal subunit protein bS20 from Mannheimia succiniciproducens (strain KCTC 0769BP / MBEL55E).